A 102-amino-acid chain; its full sequence is Protein PAPPAS (102 aa).

The next 2 membrane-spanning stretches (helical) occupy residues 13 to 33 and 82 to 102; these read LFLT…FVKW and IGSD…FFFF.

Expressed in placenta with lower expression in brain, kidney and testis.

The protein resides in the endoplasmic reticulum membrane. The protein is Protein PAPPAS (PAPPA-AS1) of Homo sapiens (Human).